The primary structure comprises 421 residues: Nuclear envelope integral membrane protein 2 (421 aa).

An N-terminal signal peptide occupies residues 1-22 (MLPRLWWLVLWLQPLATLPASA). 6 consecutive transmembrane segments (helical) span residues 64-84 (YMWS…IVYI), 147-167 (NIVD…FLYA), 175-195 (VFYY…FVLL), 206-226 (TFGA…CQLM), 238-258 (MYIL…CYSH), and 281-301 (LVYT…VLLF).

It belongs to the NEMP family. In terms of tissue distribution, in the ovary, highly expressed in somatic cells.

The protein resides in the nucleus inner membrane. This chain is Nuclear envelope integral membrane protein 2 (Nemp2), found in Mus musculus (Mouse).